The primary structure comprises 211 residues: Dual specificity protein phosphatase 26 (211 aa).

Residues 60–207 (NHADEVWPGL…LLALDRRLRQ (148 aa)) enclose the Tyrosine-protein phosphatase domain. Catalysis depends on Cys152, which acts as the Phosphocysteine intermediate.

This sequence belongs to the protein-tyrosine phosphatase family. Non-receptor class dual specificity subfamily. In terms of assembly, interacts with HSF4.

It localises to the cytoplasm. The protein localises to the nucleus. Its subcellular location is the golgi apparatus. The catalysed reaction is O-phospho-L-tyrosyl-[protein] + H2O = L-tyrosyl-[protein] + phosphate. It carries out the reaction O-phospho-L-seryl-[protein] + H2O = L-seryl-[protein] + phosphate. It catalyses the reaction O-phospho-L-threonyl-[protein] + H2O = L-threonyl-[protein] + phosphate. Inactivates MAPK1 and MAPK3 which leads to dephosphorylation of heat shock factor protein 4 and a reduction in its DNA-binding activity. This Pongo abelii (Sumatran orangutan) protein is Dual specificity protein phosphatase 26 (DUSP26).